Consider the following 621-residue polypeptide: CEP295 N-terminal-like protein (621 aa).

The tract at residues 142-253 (GGRARENEPD…RSKGADLERS (112 aa)) is disordered. Residues 159 to 170 (RSARPPRAKEKH) show a composition bias toward basic residues. Basic and acidic residues predominate over residues 171–185 (RAALSEERSCREELG). The span at 203-213 (KPQTTKATGRM) shows a compositional bias: polar residues. Residues 219-229 (PPEKRKGRPEP) show a composition bias toward basic and acidic residues. The stretch at 328–359 (QCTLREKNKWQKELELAFEELFNINRKLKKHL) forms a coiled coil. Disordered regions lie at residues 385–421 (CGAGTPRGKKMADPEMLPAGEPRSPAEEEAQQAASKT), 491–529 (DQADRVGSTASRQRQKAEMEQRRQKQLESLEQMEHPDMS), and 543–586 (REQR…DRHS). Positions 498-525 (STASRQRQKAEMEQRRQKQLESLEQMEH) form a coiled coil. Positions 505 to 529 (QKAEMEQRRQKQLESLEQMEHPDMS) are enriched in basic and acidic residues. Over residues 568–578 (ELSTTSPSGTS) the composition is skewed to polar residues.

The protein localises to the cell projection. It localises to the cilium. The chain is CEP295 N-terminal-like protein from Homo sapiens (Human).